Consider the following 270-residue polypeptide: Orotidine 5'-phosphate decarboxylase (270 aa).

Substrate-binding positions include Asp39, 61–63 (KTH), 93–102 (DRKFADIGNT), Tyr221, and Arg239. Residue Lys95 is the Proton donor of the active site.

Belongs to the OMP decarboxylase family.

The catalysed reaction is orotidine 5'-phosphate + H(+) = UMP + CO2. The protein operates within pyrimidine metabolism; UMP biosynthesis via de novo pathway; UMP from orotate: step 2/2. The chain is Orotidine 5'-phosphate decarboxylase (URA3) from Candida dubliniensis (strain CD36 / ATCC MYA-646 / CBS 7987 / NCPF 3949 / NRRL Y-17841) (Yeast).